The following is a 230-amino-acid chain: 7-cyano-7-deazaguanine synthase (230 aa).

7–17 (CSGGLDSVSLA) lines the ATP pocket. 4 residues coordinate Zn(2+): Cys185, Cys193, Cys196, and Cys199.

The protein belongs to the QueC family. Zn(2+) is required as a cofactor.

It carries out the reaction 7-carboxy-7-deazaguanine + NH4(+) + ATP = 7-cyano-7-deazaguanine + ADP + phosphate + H2O + H(+). The protein operates within purine metabolism; 7-cyano-7-deazaguanine biosynthesis. Catalyzes the ATP-dependent conversion of 7-carboxy-7-deazaguanine (CDG) to 7-cyano-7-deazaguanine (preQ(0)). The protein is 7-cyano-7-deazaguanine synthase of Ruegeria pomeroyi (strain ATCC 700808 / DSM 15171 / DSS-3) (Silicibacter pomeroyi).